A 1292-amino-acid polypeptide reads, in one-letter code: Putative late blight resistance protein homolog R1C-3 (1292 aa).

2 coiled-coil regions span residues 394-414 (DSLAFLKNQLQVIQTKFESMQ) and 505-526 (RMNEEIVGFEDVIETLRKKLLN). The 288-residue stretch at 505 to 792 (RMNEEIVGFE…SESFVKSCEG (288 aa)) folds into the NB-ARC domain. 538–545 (GMPGLGKT) contacts ATP. 7 LRR repeats span residues 842–865 (AEENFLLWINRDQITKPSSCVYSH), 920–944 (FKFLKVLDLEHQVVIDSIPTELFYL), 963–991 (LWNLETLILNRTSAATGKTLLLPSTVWDM), 1066–1089 (PIRLEMLKLHQSNIFNPISFCISA), 1094–1113 (YLELSGFYLDSQYLSETADH), 1114–1142 (LKHLEVLKLYYVEFGDHREWKVSNGMFPQ), and 1163–1187 (FPNLEQLVLRGCRHLMEIPSCFMDI). The 68-residue stretch at 1211–1278 (ETQVEDNQNT…KLRNVAYADE (68 aa)) folds into the HMA domain.

Belongs to the disease resistance NB-LRR family.

The protein localises to the cytoplasm. Its subcellular location is the membrane. Functionally, confers resistance to late blight (Phytophthora infestans) races carrying the avirulence gene Avr1. Resistance proteins guard the plant against pathogens that contain an appropriate avirulence protein via an indirect interaction with this avirulence protein. That triggers a defense system including the hypersensitive response, which restricts the pathogen growth. In Solanum demissum (Wild potato), this protein is Putative late blight resistance protein homolog R1C-3 (R1C-3).